The sequence spans 371 residues: UDP-N-acetylglucosamine--N-acetylmuramyl-(pentapeptide) pyrophosphoryl-undecaprenol N-acetylglucosamine transferase (371 aa).

UDP-N-acetyl-alpha-D-glucosamine is bound by residues 10–12 (TGG), Asn-122, Arg-166, Ser-196, and Gln-301.

It belongs to the glycosyltransferase 28 family. MurG subfamily.

It is found in the cell inner membrane. The enzyme catalyses di-trans,octa-cis-undecaprenyl diphospho-N-acetyl-alpha-D-muramoyl-L-alanyl-D-glutamyl-meso-2,6-diaminopimeloyl-D-alanyl-D-alanine + UDP-N-acetyl-alpha-D-glucosamine = di-trans,octa-cis-undecaprenyl diphospho-[N-acetyl-alpha-D-glucosaminyl-(1-&gt;4)]-N-acetyl-alpha-D-muramoyl-L-alanyl-D-glutamyl-meso-2,6-diaminopimeloyl-D-alanyl-D-alanine + UDP + H(+). It participates in cell wall biogenesis; peptidoglycan biosynthesis. Functionally, cell wall formation. Catalyzes the transfer of a GlcNAc subunit on undecaprenyl-pyrophosphoryl-MurNAc-pentapeptide (lipid intermediate I) to form undecaprenyl-pyrophosphoryl-MurNAc-(pentapeptide)GlcNAc (lipid intermediate II). The sequence is that of UDP-N-acetylglucosamine--N-acetylmuramyl-(pentapeptide) pyrophosphoryl-undecaprenol N-acetylglucosamine transferase from Halothermothrix orenii (strain H 168 / OCM 544 / DSM 9562).